Reading from the N-terminus, the 210-residue chain is Somatotropin (210 aa).

A signal peptide spans 1–22 (MGQVFLLMPVLLVSCFLSQGAA). Zn(2+) is bound at residue His38. A disulfide bridge connects residues Cys71 and Cys183. Glu192 lines the Zn(2+) pocket. A disulfide bond links Cys200 and Cys208.

The protein belongs to the somatotropin/prolactin family.

Its subcellular location is the secreted. In terms of biological role, growth hormone plays an important role in growth control and is involved in the regulation of several anabolic processes. Implicated as an osmoregulatory substance important for seawater adaptation. The protein is Somatotropin (gh) of Oncorhynchus tshawytscha (Chinook salmon).